A 461-amino-acid polypeptide reads, in one-letter code: MQKNEIKQSDMKPLIIDSSWTERFLPDPPREKDNRPPFRRDRGRILHSAAFRCLQAKTQIHAIGENDFYRTRLTHSLEVAQIGSSLVAQLKFLETFESLSQTLNIDKNELQKQLKPLLPSNDLIESLCFAHDIGHPPFGHGGETALNYMMAEQGGFEGNAQTFRILTKLEPYTENAGMNLTRRTLLGVVKYPALLDVASPQYAELNFSRNIDPRFVRIHDWIPGKGIFRDDLKMFNWLLENLSENDRTLFGKFKKVRENPAESLHTRFKSLDCSIMELADDIAYGVHDLEDAIVTGVVNPHQWQAAHSALKQIPSAWLQENIDSISQRLFSDKHFERKQAIGALVNFFITNVRWKLTANFDEPLLRYNAELSPEVIVALGVFKKFVWDYVIRNVDTQRIEYKGQRMLTEMFQIFESDPERLLPRNTANRWRNAPEERKKRIICDYIAGMSDAHALRVYQQL.

Residues 22 to 41 form a disordered region; it reads ERFLPDPPREKDNRPPFRRD. Basic and acidic residues predominate over residues 24–41; that stretch reads FLPDPPREKDNRPPFRRD. In terms of domain architecture, HD spans 72–285; it reads RLTHSLEVAQ…MELADDIAYG (214 aa).

The protein belongs to the dGTPase family. Type 2 subfamily.

This is Deoxyguanosinetriphosphate triphosphohydrolase-like protein from Haemophilus influenzae (strain PittEE).